The following is a 426-amino-acid chain: Tol-Pal system protein TolB (426 aa).

The signal sequence occupies residues 1 to 24 (MKLKSRFTSIIGVITLFFSQTVTA).

Belongs to the TolB family. In terms of assembly, the Tol-Pal system is composed of five core proteins: the inner membrane proteins TolA, TolQ and TolR, the periplasmic protein TolB and the outer membrane protein Pal. They form a network linking the inner and outer membranes and the peptidoglycan layer.

The protein localises to the periplasm. In terms of biological role, part of the Tol-Pal system, which plays a role in outer membrane invagination during cell division and is important for maintaining outer membrane integrity. This Actinobacillus pleuropneumoniae serotype 3 (strain JL03) protein is Tol-Pal system protein TolB.